A 214-amino-acid polypeptide reads, in one-letter code: Putative pit accessory protein (214 aa).

It belongs to the UPF0111 family.

Could be involved in orthophosphate transport. This chain is Putative pit accessory protein, found in Rhizobium meliloti (strain 1021) (Ensifer meliloti).